A 234-amino-acid chain; its full sequence is Phosphoribosylformylglycinamidine synthase subunit PurQ (234 aa).

Residues 3-231 (AAVVVFPGSN…ALYLERRKDH (229 aa)) enclose the Glutamine amidotransferase type-1 domain. Cysteine 87 acts as the Nucleophile in catalysis. Residues histidine 200 and glutamate 202 contribute to the active site.

In terms of assembly, part of the FGAM synthase complex composed of 1 PurL, 1 PurQ and 2 PurS subunits.

The protein resides in the cytoplasm. It catalyses the reaction N(2)-formyl-N(1)-(5-phospho-beta-D-ribosyl)glycinamide + L-glutamine + ATP + H2O = 2-formamido-N(1)-(5-O-phospho-beta-D-ribosyl)acetamidine + L-glutamate + ADP + phosphate + H(+). The catalysed reaction is L-glutamine + H2O = L-glutamate + NH4(+). The protein operates within purine metabolism; IMP biosynthesis via de novo pathway; 5-amino-1-(5-phospho-D-ribosyl)imidazole from N(2)-formyl-N(1)-(5-phospho-D-ribosyl)glycinamide: step 1/2. Its function is as follows. Part of the phosphoribosylformylglycinamidine synthase complex involved in the purines biosynthetic pathway. Catalyzes the ATP-dependent conversion of formylglycinamide ribonucleotide (FGAR) and glutamine to yield formylglycinamidine ribonucleotide (FGAM) and glutamate. The FGAM synthase complex is composed of three subunits. PurQ produces an ammonia molecule by converting glutamine to glutamate. PurL transfers the ammonia molecule to FGAR to form FGAM in an ATP-dependent manner. PurS interacts with PurQ and PurL and is thought to assist in the transfer of the ammonia molecule from PurQ to PurL. This chain is Phosphoribosylformylglycinamidine synthase subunit PurQ, found in Pseudothermotoga lettingae (strain ATCC BAA-301 / DSM 14385 / NBRC 107922 / TMO) (Thermotoga lettingae).